The chain runs to 162 residues: Protein S40-4 (162 aa).

The protein belongs to the senescence regulator S40 family.

The protein resides in the cytoplasm. This is Protein S40-4 from Arabidopsis thaliana (Mouse-ear cress).